Here is a 253-residue protein sequence, read N- to C-terminus: Trans-aconitate 2-methyltransferase (253 aa).

The protein belongs to the methyltransferase superfamily. Tam family.

The protein localises to the cytoplasm. The catalysed reaction is trans-aconitate + S-adenosyl-L-methionine = (E)-3-(methoxycarbonyl)pent-2-enedioate + S-adenosyl-L-homocysteine. Catalyzes the S-adenosylmethionine monomethyl esterification of trans-aconitate. This is Trans-aconitate 2-methyltransferase from Klebsiella pneumoniae (strain 342).